We begin with the raw amino-acid sequence, 180 residues long: MELDLSLDASGVEIPEPLNGSLFAHDSWVPVLQQWIELVRSNPDLSCPSVVRQAPEVSLGLHFTNDAGIAELNSQWRQKSGPTDVLSFAALDDTPDWLEGEAVELGDIIVSVDTAQRQAQNHNHSLGYELHWLISHGLLHLLGWDHPDERRLSGMLALQERLLDSTGNVLPKGQRPVEIE.

Residues His-136, His-140, and His-146 each coordinate Zn(2+).

The protein belongs to the endoribonuclease YbeY family. Zn(2+) serves as cofactor.

It localises to the cytoplasm. Its function is as follows. Single strand-specific metallo-endoribonuclease involved in late-stage 70S ribosome quality control and in maturation of the 3' terminus of the 16S rRNA. The sequence is that of Endoribonuclease YbeY from Synechococcus sp. (strain CC9902).